The sequence spans 832 residues: Polyphosphoinositide phosphatase (832 aa).

Residues 145 to 491 (IEKVDLARTF…GDAIALQYGG (347 aa)) form the SAC domain.

As to quaternary structure, component of the PI(3,5)P2 regulatory complex. Mg(2+) serves as cofactor.

The protein resides in the cytoplasm. Its subcellular location is the vacuole membrane. It catalyses the reaction a 1,2-diacyl-sn-glycero-3-phospho-(1D-myo-inositol-3,5-bisphosphate) + H2O = a 1,2-diacyl-sn-glycero-3-phospho-(1D-myo-inositol-3-phosphate) + phosphate. In terms of biological role, the PI(3,5)P2 regulatory complex regulates both the synthesis and turnover of phosphatidylinositol 3,5-bisphosphate (PtdIns(3,5)P2). This chain is Polyphosphoinositide phosphatase, found in Schizosaccharomyces pombe (strain 972 / ATCC 24843) (Fission yeast).